Here is a 38-residue protein sequence, read N- to C-terminus: Photosystem II reaction center protein L (38 aa).

Residues 17–37 form a helical membrane-spanning segment; the sequence is SLFWGLLLIFVLAVLFSSYFF.

Belongs to the PsbL family. PSII is composed of 1 copy each of membrane proteins PsbA, PsbB, PsbC, PsbD, PsbE, PsbF, PsbH, PsbI, PsbJ, PsbK, PsbL, PsbM, PsbT, PsbX, PsbY, PsbZ, Psb30/Ycf12, at least 3 peripheral proteins of the oxygen-evolving complex and a large number of cofactors. It forms dimeric complexes.

The protein localises to the plastid. The protein resides in the chloroplast thylakoid membrane. One of the components of the core complex of photosystem II (PSII). PSII is a light-driven water:plastoquinone oxidoreductase that uses light energy to abstract electrons from H(2)O, generating O(2) and a proton gradient subsequently used for ATP formation. It consists of a core antenna complex that captures photons, and an electron transfer chain that converts photonic excitation into a charge separation. This subunit is found at the monomer-monomer interface and is required for correct PSII assembly and/or dimerization. The chain is Photosystem II reaction center protein L from Gracilaria tenuistipitata var. liui (Red alga).